A 195-amino-acid polypeptide reads, in one-letter code: Shikimate kinase (195 aa).

33-38 (GAGKTT) serves as a coordination point for ATP. Threonine 37 provides a ligand contact to Mg(2+). Substrate is bound by residues aspartate 55, arginine 79, and glycine 101. Arginine 139 is an ATP binding site. Substrate is bound at residue arginine 158. Residue arginine 175 coordinates ATP.

Belongs to the shikimate kinase family. Monomer. The cofactor is Mg(2+).

The protein localises to the cytoplasm. It catalyses the reaction shikimate + ATP = 3-phosphoshikimate + ADP + H(+). Its pathway is metabolic intermediate biosynthesis; chorismate biosynthesis; chorismate from D-erythrose 4-phosphate and phosphoenolpyruvate: step 5/7. In terms of biological role, catalyzes the specific phosphorylation of the 3-hydroxyl group of shikimic acid using ATP as a cosubstrate. The polypeptide is Shikimate kinase (Nitrosospira multiformis (strain ATCC 25196 / NCIMB 11849 / C 71)).